The sequence spans 143 residues: Ribosome-binding factor A (143 aa).

A disordered region spans residues 123–143 (DNSLQENYKDSDKETKVEKLR).

The protein belongs to the RbfA family. In terms of assembly, monomer. Binds 30S ribosomal subunits, but not 50S ribosomal subunits or 70S ribosomes.

It localises to the cytoplasm. Functionally, one of several proteins that assist in the late maturation steps of the functional core of the 30S ribosomal subunit. Associates with free 30S ribosomal subunits (but not with 30S subunits that are part of 70S ribosomes or polysomes). Required for efficient processing of 16S rRNA. May interact with the 5'-terminal helix region of 16S rRNA. This is Ribosome-binding factor A from Francisella philomiragia subsp. philomiragia (strain ATCC 25017 / CCUG 19701 / FSC 153 / O#319-036).